A 265-amino-acid chain; its full sequence is HUWE1-associated protein modifying stress responses (265 aa).

4 disordered regions span residues 1-22 (MEDKKEEGESEIQEHGPEHWFS), 145-170 (RNSRAPPRLTVVSPNRATPTETGSSV), 195-218 (VRSSTPGSPTHVSGSSNTGRRRNG), and 240-265 (GTRKRTSAQCGDVITDSPTHKRNRMI). Polar residues-rich tracts occupy residues 156-170 (VSPNRATPTETGSSV) and 195-212 (VRSSTPGSPTHVSGSSNT).

This sequence belongs to the HAPSTR1 family. In terms of assembly, oligomer.

Its subcellular location is the nucleus. The protein localises to the cytoplasm. Functionally, acts as a central player within a network of stress response pathways promoting cellular adaptability. Functions as a negative regulator of TP53/P53 in the cellular response to telomere erosion and probably also DNA damage. This Xenopus tropicalis (Western clawed frog) protein is HUWE1-associated protein modifying stress responses.